Here is a 560-residue protein sequence, read N- to C-terminus: Nucleoprotein (560 aa).

The segment at 54 to 236 (LRKAKRSDAD…ITRDESAVNI (183 aa)) is binding site for the cap structure m7GTP. The segment covering 323–332 (GRSWDNTSVD) has biased composition (polar residues). Positions 323–349 (GRSWDNTSVDLNPKPDPGPRAPEKNGQ) are disordered. 2 residues coordinate Mn(2+): Asp380 and Glu382. Zn(2+) contacts are provided by Glu390, Cys497, His500, and Cys521. Residue Asp525 participates in Mn(2+) binding.

It belongs to the arenaviridae nucleocapsid protein family. In terms of assembly, homomultimerizes to form the nucleocapsid. Binds to viral genomic RNA. Interacts with glycoprotein G2. Interacts with protein Z; this interaction probably directs the encapsidated genome to budding sites. Interacts with protein L; this interaction does not interfere with Z-L interaction. Interacts with host IKBKE (via Protein kinase domain); the interaction inhibits IKBKE kinase activity.

Its subcellular location is the virion. The protein resides in the host cytoplasm. Encapsidates the genome, protecting it from nucleases. The encapsidated genomic RNA is termed the nucleocapsid (NC). Serves as template for viral transcription and replication. The increased presence of protein N in host cell does not seem to trigger the switch from transcription to replication as observed in other negative strain RNA viruses. Through the interaction with host IKBKE, strongly inhibits the phosphorylation and nuclear translocation of host IRF3, a protein involved in interferon activation pathway, leading to the inhibition of interferon-beta and IRF3-dependent promoters activation. Also encodes a functional 3'-5' exoribonuclease that degrades preferentially dsRNA substrates and thereby participates in the suppression of interferon induction. The polypeptide is Nucleoprotein (Cupixi mammarenavirus (isolate Rat/Brasil/BeAn 119303/1970) (CPXV)).